The following is a 156-amino-acid chain: 6,7-dimethyl-8-ribityllumazine synthase (156 aa).

5-amino-6-(D-ribitylamino)uracil-binding positions include phenylalanine 22, 57 to 59 (AYE), and 81 to 83 (TVI). 86–87 (GT) contacts (2S)-2-hydroxy-3-oxobutyl phosphate. Catalysis depends on histidine 89, which acts as the Proton donor. Position 114 (phenylalanine 114) interacts with 5-amino-6-(D-ribitylamino)uracil. Residue arginine 128 participates in (2S)-2-hydroxy-3-oxobutyl phosphate binding.

It belongs to the DMRL synthase family. As to quaternary structure, forms an icosahedral capsid composed of 60 subunits, arranged as a dodecamer of pentamers.

It catalyses the reaction (2S)-2-hydroxy-3-oxobutyl phosphate + 5-amino-6-(D-ribitylamino)uracil = 6,7-dimethyl-8-(1-D-ribityl)lumazine + phosphate + 2 H2O + H(+). Its pathway is cofactor biosynthesis; riboflavin biosynthesis; riboflavin from 2-hydroxy-3-oxobutyl phosphate and 5-amino-6-(D-ribitylamino)uracil: step 1/2. In terms of biological role, catalyzes the formation of 6,7-dimethyl-8-ribityllumazine by condensation of 5-amino-6-(D-ribitylamino)uracil with 3,4-dihydroxy-2-butanone 4-phosphate. This is the penultimate step in the biosynthesis of riboflavin. The sequence is that of 6,7-dimethyl-8-ribityllumazine synthase from Sodalis glossinidius (strain morsitans).